We begin with the raw amino-acid sequence, 2060 residues long: Unconventional myosin-X (2060 aa).

Methionine 1 bears the N-acetylmethionine mark. The region spanning 63–739 is the Myosin motor domain; the sequence is EGVDDMASLT…LEQKLEKRRE (677 aa). ATP-binding positions include asparagine 104, tyrosine 113, 160-165, and asparagine 215; that span reads GAGKTE. Residues 619-641 form an actin-binding region; the sequence is LHSLMATLSSSNPFFVRCIKPNT. IQ domains are found at residues 742–771, 765–794, and 788–817; these read IDRAAMVIRAHILGYLARKQYRKVLCGVVT, VLCGVVTIQKNYRAFLARKRFLHLKKAAIV, and LKKAAIVFQKQLRGRLARKVYRQLLAEKRE. Positions 814–882 are SAH; sequence EKRELEERKR…LTRELEKQRE (69 aa). Positions 883 to 933 form a coiled coil; it reads NKQVEEILRLEKEIEDLQRMKEQQELSLTEASLQKLQQLRDEELRRLEDEA. A phosphoserine mark is found at serine 961, serine 964, and serine 967. Disordered stretches follow at residues 971–1039 and 1064–1088; these read SELA…PYMN and SLHNSSSGESTYCMPQNNGDLPSPD. Acidic residues predominate over residues 991 to 1005; the sequence is PEEEVDEGFEADDDA. Polar residues predominate over residues 1064-1083; sequence SLHNSSSGESTYCMPQNNGD. At threonine 1160 the chain carries Phosphothreonine. PH domains are found at residues 1214 to 1312 and 1394 to 1499; these read EALK…QVHS and EFIV…NVTD. Residues 1549 to 1697 enclose the MyTH4 domain; it reads LPYGDINLNL…PSRDEIEALI (149 aa). The 345-residue stretch at 1702 to 2046 folds into the FERM domain; that stretch reads MTSTVYCHGG…AYISMIVKKR (345 aa).

This sequence belongs to the TRAFAC class myosin-kinesin ATPase superfamily. Myosin family. In terms of assembly, monomer, when in an inactive conformation in the cytosol. Homodimer in its active, membrane-bound conformation; antiparallel coiled coil-mediated dimer formation. Interacts with ECPAS. Interacts with DCC and ITGB5; the presence of DCC inhibits ITGB5 binding. Interacts with tubulin; ITGB5 or DCC binding inhibits tubulin binding. Interacts strongly with CALM3 and weakly with CALM, the CALM3 interaction is essential for function in filopodial extension and motility. Interacts with ITGB1, ITGB3 and ITGB5. Interacts with NEO1. Interacts with VASP.

The protein resides in the cytoplasm. It localises to the cytosol. It is found in the cell projection. The protein localises to the lamellipodium. Its subcellular location is the ruffle. The protein resides in the cytoskeleton. It localises to the filopodium tip. It is found in the cell cortex. The protein localises to the filopodium membrane. Its subcellular location is the cell membrane. Its function is as follows. Myosins are actin-based motor molecules with ATPase activity. Unconventional myosins serve in intracellular movements. MYO10 binds to actin filaments and actin bundles and functions as a plus end-directed motor. Moves with higher velocity and takes larger steps on actin bundles than on single actin filaments. The tail domain binds to membranous compartments containing phosphatidylinositol 3,4,5-trisphosphate or integrins, and mediates cargo transport along actin filaments. Regulates cell shape, cell spreading and cell adhesion. Stimulates the formation and elongation of filopodia. In hippocampal neurons it induces the formation of dendritic filopodia by trafficking the actin-remodeling protein VASP to the tips of filopodia, where it promotes actin elongation. Plays a role in formation of the podosome belt in osteoclasts. In Rattus norvegicus (Rat), this protein is Unconventional myosin-X (Myo10).